Here is a 381-residue protein sequence, read N- to C-terminus: MESIGIVAPQTMHFAEPLRLQSGSVIGNYQLVVETYGELNAARSNAVLVCHALNASHHVAGVYADDPRSTGWWDNMVGPGKPLDTNRFFVIGVNNLGSCFGSTGPMSIDPSTGKPYGARFPVVTVEDWVHAQARVADAFGIERFAAVMGGSLGGMQALAWSLMYPERVAHCIDIASTPKLSAQNIAFNEVARSAILSDPDFHGGDYYAHGVKPKRGLRVARMIGHITYLSDDDMAEKFGRALRRADGALDAYNFSFDVEFEVESYLRYQGDKFADYFDANTYLLITRALDYFDPAKAFDGNLTAALAHTQAKYLIASFSTDWRFAPARSREIVKALLDNKRTVSYAEIDAPHGHDAFLLDDARYHNLIRAYYERIANEVGA.

Residues 45–360 (NAVLVCHALN…PHGHDAFLLD (316 aa)) enclose the AB hydrolase-1 domain. Ser151 acts as the Nucleophile in catalysis. Arg221 serves as a coordination point for substrate. Catalysis depends on residues Asp321 and His354. A substrate-binding site is contributed by Asp355.

The protein belongs to the AB hydrolase superfamily. MetX family. As to quaternary structure, homodimer.

It localises to the cytoplasm. The enzyme catalyses L-homoserine + succinyl-CoA = O-succinyl-L-homoserine + CoA. Its pathway is amino-acid biosynthesis; L-methionine biosynthesis via de novo pathway; O-succinyl-L-homoserine from L-homoserine: step 1/1. In terms of biological role, transfers a succinyl group from succinyl-CoA to L-homoserine, forming succinyl-L-homoserine. The polypeptide is Homoserine O-succinyltransferase (Burkholderia multivorans (strain ATCC 17616 / 249)).